Consider the following 899-residue polypeptide: Protein translocase subunit SecA (899 aa).

Residues Q87, 105-109, and D512 each bind ATP; that span reads GEGKT. The interval 846-899 is disordered; that stretch reads MEEEQQQQAQKKIVFNLGEEPATAPQPARSKKSASRNDPCPCGSGKKYKKCCGK. Zn(2+)-binding residues include C885, C887, C896, and C897.

It belongs to the SecA family. In terms of assembly, monomer and homodimer. Part of the essential Sec protein translocation apparatus which comprises SecA, SecYEG and auxiliary proteins SecDF-YajC and YidC. Zn(2+) is required as a cofactor.

The protein resides in the cell inner membrane. It is found in the cytoplasm. The catalysed reaction is ATP + H2O + cellular proteinSide 1 = ADP + phosphate + cellular proteinSide 2.. Its function is as follows. Part of the Sec protein translocase complex. Interacts with the SecYEG preprotein conducting channel. Has a central role in coupling the hydrolysis of ATP to the transfer of proteins into and across the cell membrane, serving as an ATP-driven molecular motor driving the stepwise translocation of polypeptide chains across the membrane. This chain is Protein translocase subunit SecA, found in Geobacter metallireducens (strain ATCC 53774 / DSM 7210 / GS-15).